We begin with the raw amino-acid sequence, 588 residues long: Adenine deaminase (588 aa).

The protein belongs to the metallo-dependent hydrolases superfamily. Adenine deaminase family. Homodimer. The cofactor is Mn(2+).

It carries out the reaction adenine + H2O + H(+) = hypoxanthine + NH4(+). This is Adenine deaminase from Escherichia coli O139:H28 (strain E24377A / ETEC).